We begin with the raw amino-acid sequence, 860 residues long: Leucine--tRNA ligase (860 aa).

The 'HIGH' region signature appears at Pro42–His52. The short motif at Lys619–Ser623 is the 'KMSKS' region element. ATP is bound at residue Lys622.

This sequence belongs to the class-I aminoacyl-tRNA synthetase family.

The protein localises to the cytoplasm. The enzyme catalyses tRNA(Leu) + L-leucine + ATP = L-leucyl-tRNA(Leu) + AMP + diphosphate. The protein is Leucine--tRNA ligase of Salmonella agona (strain SL483).